A 317-amino-acid chain; its full sequence is Pseudouridine-5'-phosphate glycosidase 1 (317 aa).

Glutamate 40 serves as the catalytic Proton donor. Lysine 101 and valine 121 together coordinate substrate. Residue aspartate 153 participates in Mn(2+) binding. Residue 155 to 157 participates in substrate binding; sequence SAD. Lysine 174 functions as the Nucleophile in the catalytic mechanism.

This sequence belongs to the pseudouridine-5'-phosphate glycosidase family. In terms of assembly, homotrimer. It depends on Mn(2+) as a cofactor.

It carries out the reaction D-ribose 5-phosphate + uracil = psi-UMP + H2O. Catalyzes the reversible cleavage of pseudouridine 5'-phosphate (PsiMP) to ribose 5-phosphate and uracil. Functions biologically in the cleavage direction, as part of a pseudouridine degradation pathway. The polypeptide is Pseudouridine-5'-phosphate glycosidase 1 (Rhizobium johnstonii (strain DSM 114642 / LMG 32736 / 3841) (Rhizobium leguminosarum bv. viciae)).